The primary structure comprises 122 residues: Large ribosomal subunit protein uL14 (122 aa).

It belongs to the universal ribosomal protein uL14 family. In terms of assembly, part of the 50S ribosomal subunit. Forms a cluster with proteins L3 and L19. In the 70S ribosome, L14 and L19 interact and together make contacts with the 16S rRNA in bridges B5 and B8.

Its function is as follows. Binds to 23S rRNA. Forms part of two intersubunit bridges in the 70S ribosome. The chain is Large ribosomal subunit protein uL14 from Rhodospirillum centenum (strain ATCC 51521 / SW).